Reading from the N-terminus, the 815-residue chain is MDSTYALHLAVATLLGASFAAASAYYMHRKTLDQLLRFARSLDRDHRRRNRHLLDADDDDDDDPPRDHDRRTTLPIPPGLPPLHTGREGKPIISPASTKRVGPLVRPTTPRSPVPTVSAFETIEDSDDDDENIAPDAKNNAVSLLTNGTIGSDPLPGKASQNGDTKPVPSTNMIRSQSATGSLHGAQHNPVAADILRKEPEHETFSRINITAVETPSPDEIEAYKVLQKCLELREKYMFREEVAPWEKEIITDPSTPKPNPNPFYYEQQTKTEHHFEMVDGVIHVYPNKDAKERIYPVADATTFFTDMHYILRVLAAGDIRTVCYKRLNLLEQKFNLHLMVNADRELLAQKAAPHRDFYNVRKVDTHVHHSACMNQKHLLRFIKSKLRKEPDEVVIFRDGTYLTLKEVFESLDLTGYDLNVDLLDVHADKSTFHRFDKFNLKYNPCGQSRLREIFLKQDNLIQGRFLAELTKEVFSDLEASKYQMAEYRISIYGRKKSEWDQMASWIVNNELYSENVVWLIQIPRIYNVYREMGTINSFQNLLDNIFLPLFEVTVDPASHPQLHVFLQQVVGLDLVDDESKPERRPTKHMPTPEQWTNVFNPAYAYYVYYCYANLYTLNKLRESKGMTTIKLRPHCGEAGDIDHLAAAFLTSHNIAHGVNLKKSPVLQYLYYLAQIGLAMSPLSNNSLFIDYHRNPFPTFFLRGLNVSLSTDDPLQIHLTKEPLVEEYSIAASLWKLSSCDLCEIARNSVYQSGFSHRLKSHWIGRNYYKRGHDGNDIHQTNVPHIRIEFRHTIWKEEMELIHLRNVDIPEEIDR.

The chain crosses the membrane as a helical span at residues Y5–M27. Disordered stretches follow at residues L53–T116 and L144–M173. Over residues V105–T116 the composition is skewed to low complexity. Positions A159–M173 are enriched in polar residues. Residues H367 and H369 each contribute to the Zn(2+) site. Residues H369 and K438–Y443 each bind substrate. H635 contacts Zn(2+). E638 lines the substrate pocket. The Proton acceptor role is filled by H657. Zn(2+) is bound at residue D712. D713–Q716 contacts substrate.

It belongs to the metallo-dependent hydrolases superfamily. Adenosine and AMP deaminases family. In terms of assembly, homodimer. Requires Zn(2+) as cofactor.

It localises to the membrane. It carries out the reaction AMP + H2O + H(+) = IMP + NH4(+). Its pathway is purine metabolism; IMP biosynthesis via salvage pathway; IMP from AMP: step 1/1. Functionally, AMP deaminase plays a critical role in energy metabolism. The chain is Probable AMP deaminase (AMPD) from Oryza sativa subsp. japonica (Rice).